A 279-amino-acid chain; its full sequence is Energy-coupling factor transporter ATP-binding protein EcfA1 (279 aa).

Residues 5 to 240 (IELKKVTFNY…GDELLQLGLD (236 aa)) form the ABC transporter domain. 40–47 (GHNGSGKS) is a binding site for ATP.

This sequence belongs to the ABC transporter superfamily. Energy-coupling factor EcfA family. Forms a stable energy-coupling factor (ECF) transporter complex composed of 2 membrane-embedded substrate-binding proteins (S component), 2 ATP-binding proteins (A component) and 2 transmembrane proteins (T component).

The protein localises to the cell membrane. ATP-binding (A) component of a common energy-coupling factor (ECF) ABC-transporter complex. Unlike classic ABC transporters this ECF transporter provides the energy necessary to transport a number of different substrates. The sequence is that of Energy-coupling factor transporter ATP-binding protein EcfA1 from Streptococcus pyogenes serotype M28 (strain MGAS6180).